Consider the following 199-residue polypeptide: MAKSAEVKLAIFGRAGVGKSALVVRFLTKRFIWEYDPTLESTYRHQATIDDEVVTMEILDTAGQEDTIQREGHMRWGEGFVLVYDITDRGSFEEVLPLKNILDEIKKPKNVTLILVGNKADLDHSRQVSTEEGEKLATELACAFYECSACTGEGNITEIFYELCREVRRRRMVQGKTRRRSSTTHVKQAINKMLTKISS.

GTP is bound by residues Gly13–Ser20, Asp60–Gln64, and Asn118–Asp121.

It belongs to the small GTPase superfamily. Ras family.

It is found in the cytoplasm. The enzyme catalyses GTP + H2O = GDP + phosphate + H(+). Binds GDP/GTP and possesses intrinsic GTPase activity. Has higher affinity for GDP than for GTP. The protein is Ras-related and estrogen-regulated growth inhibitor (RERG) of Bos taurus (Bovine).